We begin with the raw amino-acid sequence, 185 residues long: Adenine phosphoribosyltransferase (185 aa).

This sequence belongs to the purine/pyrimidine phosphoribosyltransferase family. As to quaternary structure, homodimer.

The protein localises to the cytoplasm. It carries out the reaction AMP + diphosphate = 5-phospho-alpha-D-ribose 1-diphosphate + adenine. It functions in the pathway purine metabolism; AMP biosynthesis via salvage pathway; AMP from adenine: step 1/1. Catalyzes a salvage reaction resulting in the formation of AMP, that is energically less costly than de novo synthesis. This chain is Adenine phosphoribosyltransferase, found in Shewanella denitrificans (strain OS217 / ATCC BAA-1090 / DSM 15013).